The primary structure comprises 175 residues: R-phycoerythrin subunit beta (175 aa).

Position 82 (Cys82) interacts with (2R,3E)-phycoerythrobilin.

The protein belongs to the phycobiliprotein family. In terms of assembly, homodimer. In terms of processing, contains one covalently linked phycoerythrobilin chromophore.

Its function is as follows. Green-light absorbing phycoerythrin of unknown function. The polypeptide is R-phycoerythrin subunit beta (cpeB) (Prochlorococcus marinus subsp. pastoris (strain CCMP1986 / NIES-2087 / MED4)).